Consider the following 282-residue polypeptide: Putative dolichyldiphosphatase (282 aa).

Helical transmembrane passes span 26–46 (LLCA…ATLI) and 93–113 (MPSS…LFLL). Residues 121 to 153 (QQQQQQQKQKQRERKKQVTNVKTTTTNGSGNGS) are disordered. Positions 138-148 (VTNVKTTTTNG) are enriched in low complexity. 2 helical membrane passes run 173 to 193 (WSFA…GAVA) and 207 to 227 (VLVG…VTHV).

This sequence belongs to the dolichyldiphosphatase family.

It localises to the endoplasmic reticulum membrane. It carries out the reaction a di-trans,poly-cis-dolichyl diphosphate + H2O = a di-trans,poly-cis-dolichyl phosphate + phosphate + H(+). It participates in protein modification; protein glycosylation. This is Putative dolichyldiphosphatase from Neurospora crassa (strain ATCC 24698 / 74-OR23-1A / CBS 708.71 / DSM 1257 / FGSC 987).